Consider the following 456-residue polypeptide: Argininosuccinate lyase (456 aa).

It belongs to the lyase 1 family. Argininosuccinate lyase subfamily.

It is found in the cytoplasm. The catalysed reaction is 2-(N(omega)-L-arginino)succinate = fumarate + L-arginine. Its pathway is amino-acid biosynthesis; L-arginine biosynthesis; L-arginine from L-ornithine and carbamoyl phosphate: step 3/3. The chain is Argininosuccinate lyase from Listeria monocytogenes serovar 1/2a (strain ATCC BAA-679 / EGD-e).